We begin with the raw amino-acid sequence, 249 residues long: Zinc finger protein mnm-2 (249 aa).

A disordered region spans residues 20-65 (PKEELETEEEDEEEDEEEELSSSEVTSENDMETESASSSASSVGQP). Positions 24–52 (LETEEEDEEEDEEEELSSSEVTSENDMET) are enriched in acidic residues. 3 consecutive C2H2-type zinc fingers follow at residues 168–190 (YRCD…KRIH), 196–218 (FKCE…RLTH), and 224–246 (YVCG…MRTH).

As to expression, in larva and adult, expressed in the M3 pharyngeal motor neurons, extrapharyngeal neurons in the head, the PQR tail neurons, rectal cells, vulva cells, the spermetheca-uterine valve, body wall muscle cells and neurons of the ventral nerve cord. In the embryo, expressed in pharyngeal cells, extrapharyngeal head neurons and within the tail. Expressed in body wall muscle cells during late embryonic stages. Expressed in the mother cells of the M2 and M3 pharyngeal motor neurons precursor cells at the embryonic bean stage and subsequently in the M2 and M3 cells as they are born. Expression is sustained only in the two M3 cells up to at least the 5-day-old adult. In contrast, expression gradually declines in the M2 cells beginning from the time of their birth, and is completely undetectable by the time of hatching.

Its subcellular location is the nucleus. In terms of biological role, required in the M3 pharyngeal motor neuron to guide the growth cone of the sister M2 motor neuron during axon development. The chain is Zinc finger protein mnm-2 from Caenorhabditis elegans.